Here is a 490-residue protein sequence, read N- to C-terminus: Trigger factor (490 aa).

The 82-residue stretch at 162–243 (GDFVSIDLSA…VGSIKERELP (82 aa)) folds into the PPIase FKBP-type domain. A disordered region spans residues 433 to 490 (VDAVLGPRRGGADEAGAEAEAAEEKPAKAKKSADSEKTDKSEKAEKKSKKKSKDDDAE). Residues 454 to 477 (AEEKPAKAKKSADSEKTDKSEKAE) are compositionally biased toward basic and acidic residues.

This sequence belongs to the FKBP-type PPIase family. Tig subfamily.

It localises to the cytoplasm. It carries out the reaction [protein]-peptidylproline (omega=180) = [protein]-peptidylproline (omega=0). In terms of biological role, involved in protein export. Acts as a chaperone by maintaining the newly synthesized protein in an open conformation. Functions as a peptidyl-prolyl cis-trans isomerase. In Mycobacteroides abscessus (strain ATCC 19977 / DSM 44196 / CCUG 20993 / CIP 104536 / JCM 13569 / NCTC 13031 / TMC 1543 / L948) (Mycobacterium abscessus), this protein is Trigger factor.